The following is a 647-amino-acid chain: MIKITFPDGAVREFESGVTTFDIAESLSKSLAKKALAGKFNDQLIDTTRAIEEDGSIEIVTPDHKDAYEVLRHSAAHLFAQAAKRLFPNLHLGVGPAIAEGFYYDTDNAEGQISNEDLPRIEAEMQKIVTENYPCIREEVTKEEALELFKDDPYKVELINEHAGAGLTVYRQGEFVDLCRGPHVPSTGRIQVFHLLNVAGAYWRGNSDNNMMQRIYGTAWFDKKDLKAYLTRLEEAKERDHRKLGKELDLFMISQEVGQGLPFWLPDGATIRRTLERYITDKELASGYQHVYTPPLASVELYKTSGHWDHYQEDMFPVMDMGDGEEFVLRPMNCPHHIQVYKNHVRSYRELPIRIAELGMMHRYEKSGALSGLQRVREMTLNDGHIFVTPEQIQEEFQRALQLIIDVYADFNLTDYRFRLSYRDPNDTHKYYDNDEMWENAQSMLKAALDEMGVDYFEAEGEAAFYGPKLDIQVKTALGNEETLSTIQLDFLLPERFDLKYIGADGEEHRPVMIHRGVISTMERFTAILIETYKGAFPTWLAPHQVTVIPISNEAHIDYAWEVAKTLRDRGVRADVDDRNEKMQYKIRTSQTSKIPYQLIVGDKEMEDKSVNVRRYGSKATHTESVEEFVENILADIARKSRPDAQA.

One can recognise a TGS domain in the interval 1–61 (MIKITFPDGA…EEDGSIEIVT (61 aa)). The segment at 240–538 (DHRKLGKELD…LIETYKGAFP (299 aa)) is catalytic. Residues C334, H385, and H515 each coordinate Zn(2+).

It belongs to the class-II aminoacyl-tRNA synthetase family. As to quaternary structure, homodimer. Zn(2+) serves as cofactor.

The protein localises to the cytoplasm. It carries out the reaction tRNA(Thr) + L-threonine + ATP = L-threonyl-tRNA(Thr) + AMP + diphosphate + H(+). In terms of biological role, catalyzes the attachment of threonine to tRNA(Thr) in a two-step reaction: L-threonine is first activated by ATP to form Thr-AMP and then transferred to the acceptor end of tRNA(Thr). Also edits incorrectly charged L-seryl-tRNA(Thr). The polypeptide is Threonine--tRNA ligase (Streptococcus pyogenes serotype M6 (strain ATCC BAA-946 / MGAS10394)).